Here is a 3092-residue protein sequence, read N- to C-terminus: Probable polyketide synthase 45 (3092 aa).

The 421-residue stretch at 10–430 folds into the Ketosynthase family 3 (KS3) domain; that stretch reads DNDVAIIGIG…GSNVCLILTE (421 aa). Active-site for beta-ketoacyl synthase activity residues include C170, H315, and H353. An acyl/malonyl transferase region spans residues 640-673; that stretch reads GILASISIGHSLGEVSSAVCSGMIDLETGCFIIY. The active-site For acyl/malonyl transferase activity is the S650. The interval 967 to 1087 is N-terminal hotdog fold; that stretch reads INQLGNRNER…GKFSITKHND (121 aa). Residues 967-1254 enclose the PKS/mFAS DH domain; it reads INQLGNRNER…YTQLTPYKNQ (288 aa). Residue H999 is the Proton acceptor; for dehydratase activity of the active site. A C-terminal hotdog fold region spans residues 1103–1254; sequence NFVTIQKKEL…YTQLTPYKNQ (152 aa). Residue D1165 is the Proton donor; for dehydratase activity of the active site. The region spanning 2566–2644 is the Carrier domain; the sequence is SDDLSIREEI…QLIQSVTDAM (79 aa). S2604 is modified (O-(pantetheine 4'-phosphoryl)serine). The helical transmembrane segment at 2705–2725 threads the bilayer; it reads NTVFLTGSSGFIGIYILFYLI.

It depends on pantetheine 4'-phosphate as a cofactor.

The protein localises to the membrane. In terms of biological role, probable polyketide synthase. The protein is Probable polyketide synthase 45 (pks45) of Dictyostelium discoideum (Social amoeba).